The chain runs to 184 residues: Flavodoxin FldP (184 aa).

The region spanning 4 to 176 is the Flavodoxin-like domain; it reads AVVVYFSGYG…TVKLYAARVA (173 aa). FMN contacts are provided by residues 10–14 and 91–147; these read SGYGH and GFTN…SVGA.

It belongs to the FldP flavodoxin family. It depends on FMN as a cofactor.

Flavodoxins are low-potential electron donors to a number of redox enzymes. FldP protects the cell from oxidative stress and reactive oxygen species (ROS) damage, thereby expanding the capabilities of P.aeruginosa to thrive in hostile environments, and contributes to bacterial survival within the host. In vitro, is able to mediate ferredoxin-NADP(H) reductase (FNR)-driven cytochrome c reduction. The polypeptide is Flavodoxin FldP (Pseudomonas aeruginosa (strain UCBPP-PA14)).